The primary structure comprises 617 residues: MGPTLAVPTPYGCIGCKLPQPEYPPALIIFMFCAMVITIVVDLIGNSMVILAVTKNKKLRNSGNIFVVSLSVADMLVAIYPYPLMLHAMSIGGWDLSQLQCQMVGFITGLSVVGSIFNIVAIAINRYCYICHSLQYERIFSVRNTCIYLVITWIMTVLAVLPNMYIGTIEYDPRTYTCIFNYLNNPVFTVTIVCIHFVLPLLIVGFCYVRIWTKVLAARDPAGQNPDNQLAEVRNFLTMFVIFLLFAVCWCPINVLTVLVAVSPKEMAGKIPNWLYLAAYFIAYFNSCLNAVIYGLLNENFRREYWTIFHAMRHPIIFFSGLISDIREMQEARTLARARAHARDQAREQDRAHACPAVEETPMNVRNVPLPGDAAAGHPDRASGHPKPHSRSSSAYRKSASTHHKSVFSHSKAASGHLKPVSGHSKPASGHPKSATVYPKPASVHFKADSVHFKGDSVHFKPDSVHFKPASSNPKPITGHHVSAGSHSKSAFSAATSHPKPTTGHIKPATSHAEPTTADYPKPATTSHPKPTAADNPELSASHCPEIPAIAHPVSDDSDLPESASSPAAGPTKPAASQLESDTIADLPDPTVVTTSTNDYHDVVVIDVEDDPDEMAV.

The Extracellular portion of the chain corresponds to 1–30; sequence MGPTLAVPTPYGCIGCKLPQPEYPPALIIF. A helical transmembrane segment spans residues 31–51; sequence MFCAMVITIVVDLIGNSMVIL. Residues 52–64 are Cytoplasmic-facing; it reads AVTKNKKLRNSGN. A helical membrane pass occupies residues 65–85; that stretch reads IFVVSLSVADMLVAIYPYPLM. Residues 86–103 are Extracellular-facing; that stretch reads LHAMSIGGWDLSQLQCQM. C101 and C178 are disulfide-bonded. Residues 104–124 form a helical membrane-spanning segment; that stretch reads VGFITGLSVVGSIFNIVAIAI. Over 125–143 the chain is Cytoplasmic; that stretch reads NRYCYICHSLQYERIFSVR. A helical transmembrane segment spans residues 144-164; it reads NTCIYLVITWIMTVLAVLPNM. At 165–188 the chain is on the extracellular side; sequence YIGTIEYDPRTYTCIFNYLNNPVF. Residues 189 to 209 form a helical membrane-spanning segment; the sequence is TVTIVCIHFVLPLLIVGFCYV. Topologically, residues 210–239 are cytoplasmic; it reads RIWTKVLAARDPAGQNPDNQLAEVRNFLTM. Residues 240-260 traverse the membrane as a helical segment; that stretch reads FVIFLLFAVCWCPINVLTVLV. Topologically, residues 261-273 are extracellular; sequence AVSPKEMAGKIPN. A helical transmembrane segment spans residues 274-294; the sequence is WLYLAAYFIAYFNSCLNAVIY. Residues 295-617 are Cytoplasmic-facing; that stretch reads GLLNENFRRE…VEDDPDEMAV (323 aa). Disordered stretches follow at residues 340–438 and 464–596; these read AHAR…ATVY and SVHF…VTTS. Residues 341 to 353 show a composition bias toward basic and acidic residues; the sequence is HARDQAREQDRAH. Over residues 485–500 the composition is skewed to polar residues; it reads GSHSKSAFSAATSHPK.

It belongs to the G-protein coupled receptor 1 family. In terms of assembly, homodimer, and heterodimer with MTNR1A and MTNR1B. Interacts with KAT5. Interacts with RTN4 isoform A/NOGO-A. Interacts with TGFBR1. Interacts with GTF2I. Cleaved by CAPN1 in a calcium-dependent manner. As to expression, hypothalamus and pituitary.

It localises to the cell membrane. Its subcellular location is the postsynaptic density. The protein localises to the nucleus. G protein-coupled receptor that plays a role in numerous physiological processes including regulation of energy metabolism, neurite outgrowth or cell migration. Promotes self-renewal and neuronal differentiation of neural progenitor cells through activation of the NOTCH and WNT/beta-catenin signaling pathways. Modulates the KAT5-dependent glucocorticoid receptor signaling by modulating KAT5 subcellular compartmentalisation. Also plays a role in the activation TGFBR1 in the absence of TGFBR2 by interfering with FKBP1A binding to TGFBR1, leading to induction of both canonical and non-canonical SMAD signaling pathways resulting in inhibition of proliferation or promotion of migration. Functionally, upon cleavage by CAPN1, functions as a scaffold in the nucleus for interacting partners such as GTF2I to promote FOS promoter activation. This is Melatonin-related receptor (GPR50) from Homo sapiens (Human).